Here is a 495-residue protein sequence, read N- to C-terminus: Autoinducer 2 import ATP-binding protein LsrA (495 aa).

ABC transporter domains are found at residues 5–233 (IEAH…TPVS) and 256–494 (AQDF…FGGQ). An ATP-binding site is contributed by 37 to 44 (GGNGAGKS).

It belongs to the ABC transporter superfamily. AI-2 autoinducer porter (TC 3.A.1.2.8) family. In terms of assembly, the complex is composed of two ATP-binding proteins (LsrA), two transmembrane proteins (LsrC and LsrD) and a solute-binding protein (LsrB).

It localises to the cell inner membrane. It catalyses the reaction ATP + H2O + (2R,4S)-2-methyl-2,3,3,4-tetrahydroxytetrahydrofuran-[AI-2-binding protein]Side 1 = ADP + phosphate + (2R,4S)-2-methyl-2,3,3,4-tetrahydroxytetrahydrofuranSide 2 + [AI-2-binding protein]Side 1.. Its function is as follows. Part of the ABC transporter complex LsrABCD involved in autoinducer 2 (AI-2) import. Responsible for energy coupling to the transport system. The sequence is that of Autoinducer 2 import ATP-binding protein LsrA (lsrA) from Enterobacter sp. (strain 638).